The sequence spans 679 residues: Altered inheritance of mitochondria protein 21 (679 aa).

The interval 1–95 is disordered; it reads MPSEVTPKVP…EELNNVMNNT (95 aa). The segment covering 9-19 has biased composition (basic and acidic residues); the sequence is VPERPSRRKTS. At Thr-18 the chain carries Phosphothreonine. The residue at position 36 (Ser-36) is a Phosphoserine. Thr-58 carries the phosphothreonine modification. A Phosphoserine modification is found at Ser-70. Thr-85 is modified (phosphothreonine). Residues 86–95 show a composition bias toward polar residues; it reads EELNNVMNNT. Ser-104 is modified (phosphoserine). Disordered stretches follow at residues 107–522 and 548–679; these read SKHN…EKIE and LMDT…FHSL. Residues 109 to 119 show a composition bias toward basic residues; the sequence is HNIHSVSRKKS. Polar residues-rich tracts occupy residues 133–149 and 164–178; these read QNGQRSASDNKTSTNPS and SAISPSNSVNKSNNE. Basic and acidic residues predominate over residues 179-213; it reads VTEHSDSEDLTEKQKVHAALDNEAGDGSHFEEKLI. Residues Ser-183, Ser-206, and Ser-231 each carry the phosphoserine modification. The segment covering 243–272 has biased composition (basic and acidic residues); the sequence is SDDKAEKFTKHPESSLEELQKHQEQQEEKI. The residue at position 277 (Thr-277) is a Phosphothreonine. The residue at position 284 (Ser-284) is a Phosphoserine. Polar residues predominate over residues 296-323; sequence EVNSQPQGPSDTETVIAATSSNVPSQIA. The residue at position 324 (Ser-324) is a Phosphoserine. Composition is skewed to basic and acidic residues over residues 339–351 and 372–383; these read KKDFEAHVQKEEL and EESKIPKIPSER. The interval 383–396 is interaction with SH3 domain of ABP1; the sequence is RPKRRAPPPVPKKP. 2 stretches are compositionally biased toward polar residues: residues 414-427 and 437-452; these read DLHNNGNSSATTAS and SSITSDTTKADFTSKL. Residues 471–482 show a composition bias toward basic and acidic residues; that stretch reads LEKKLSSPDTES. Over residues 483–492 the composition is skewed to polar residues; that stretch reads KLGTQDQSQA. Residues 501–512 are compositionally biased toward basic residues; it reads RRGRGPRGRKLP. The residue at position 552 (Thr-552) is a Phosphothreonine. Basic and acidic residues predominate over residues 556–576; it reads QAERALDEKSKSIPEEQREQS. Ser-576 carries the post-translational modification Phosphoserine. The segment covering 603–613 has biased composition (polar residues); sequence PLSQLPQTNAV. A phosphoserine mark is found at Ser-620, Ser-623, Ser-625, Ser-627, Ser-667, Ser-671, Ser-675, and Ser-678. Over residues 667-679 the composition is skewed to basic and acidic residues; that stretch reads SALHSEEASFHSL.

The protein belongs to the AIM21 family. In terms of assembly, interacts with ribosomes. Interacts with ABP1.

It localises to the cytoplasm. The protein resides in the cytoskeleton. The protein localises to the actin patch. Involved in mitochondrial migration along actin filaments. The sequence is that of Altered inheritance of mitochondria protein 21 (AIM21) from Saccharomyces cerevisiae (strain YJM789) (Baker's yeast).